The following is a 142-amino-acid chain: Large ribosomal subunit protein uL11 (142 aa).

The protein belongs to the universal ribosomal protein uL11 family. Part of the ribosomal stalk of the 50S ribosomal subunit. Interacts with L10 and the large rRNA to form the base of the stalk. L10 forms an elongated spine to which L12 dimers bind in a sequential fashion forming a multimeric L10(L12)X complex. Post-translationally, one or more lysine residues are methylated.

Forms part of the ribosomal stalk which helps the ribosome interact with GTP-bound translation factors. The sequence is that of Large ribosomal subunit protein uL11 from Rhodopseudomonas palustris (strain BisA53).